The chain runs to 428 residues: Histone deacetylase 3 (428 aa).

Positions 3-316 (KTVAYFYDPD…WTYETSLLVE (314 aa)) are histone deacetylase. 1D-myo-inositol 1,4,5,6-tetrakisphosphate contacts are provided by His-17, Gly-21, and Lys-25. His-135 is an active-site residue. Residues Asp-170, His-172, and Asp-259 each contribute to the Zn(2+) site. Arg-265 lines the 1D-myo-inositol 1,4,5,6-tetrakisphosphate pocket. Composition is skewed to basic and acidic residues over residues 388–405 (DRTD…ENYS) and 415–428 (DGDH…DVEI). The interval 388–428 (DRTDEADAEERGPEENYSRPEAPNEFYDGDHDNDKESDVEI) is disordered. Residue Ser-424 is modified to Phosphoserine.

The protein belongs to the histone deacetylase family. HD type 1 subfamily. As to quaternary structure, interacts with HDAC7 and HDAC9. Interacts with DAXX, KDM4A, HDAC10 and DACH1. Found in a complex with NCOR1 and NCOR2. Component of the N-Cor repressor complex, at least composed of NCOR1, NCOR2, HDAC3, TBL1X, TBL1R, CORO2A and GPS2. Interacts with BCOR, MJD2A/JHDM3A, NRIP1, PRDM6 and SRY. Interacts with BTBD14B. Interacts with GLIS2. Interacts (via the DNA-binding domain) with NR2C1; the interaction recruits phosphorylated NR2C1 to PML bodies for sumoylation. Component of the Notch corepressor complex. Interacts with CBFA2T3 and NKAP. Interacts with APEX1; the interaction is not dependent on the acetylated status of APEX1. Interacts with ZMYND15. Interacts with SMRT/NCOR2 and BCL6 on DNA enhancer elements. Interacts with INSM1. Interacts with XBP1 isoform 1; the interaction occurs in endothelial cell (EC) under disturbed flow. Interacts (via C-terminus) with CCAR2 (via N-terminus). Interacts with and deacetylates MEF2D. Interacts with BEND3. Interacts with NKAPL. Interacts with DHX36; this interaction occurs in a RNA-dependent manner. Interacts weakly with CRY1; this interaction is enhanced in the presence of FBXL3. Interacts with FBXL3 and BMAL1. Interacts with NCOR1. Interacts with RARA. Interacts with SETD5. In terms of assembly, (Microbial infection) Interacts with human cytomegalovirus (HHV-5) immediate early protein IE1; this interaction decreases histone acetylation and allows transcriptional activation by the virus. It depends on Zn(2+) as a cofactor. In terms of processing, sumoylated in vitro. Post-translationally, deubiquitinated on 'Lys-63'-linked ubiquitin chains by USP38; leading to a decreased level of histone acetylation. As to expression, widely expressed.

The protein resides in the nucleus. It is found in the chromosome. It localises to the cytoplasm. Its subcellular location is the cytosol. It catalyses the reaction N(6)-acetyl-L-lysyl-[histone] + H2O = L-lysyl-[histone] + acetate. The enzyme catalyses N(6)-acetyl-L-lysyl-[protein] + H2O = L-lysyl-[protein] + acetate. It carries out the reaction N(6)-(2E)-butenoyl-L-lysyl-[protein] + H2O = (2E)-2-butenoate + L-lysyl-[protein]. The catalysed reaction is N(6)-(2-hydroxyisobutanoyl)-L-lysyl-[protein] + H2O = 2-hydroxy-2-methylpropanoate + L-lysyl-[protein]. It catalyses the reaction N(6)-[(S)-lactoyl]-L-lysyl-[protein] + H2O = (S)-lactate + L-lysyl-[protein]. Inositol tetraphosphate (1D-myo-inositol 1,4,5,6-tetrakisphosphate) promotes the histone deacetylase activity by acting as an intermolecular glue between HDAC3 and NCOR2, thereby promoting its association with the N-Cor complex, a prerequisite for the histone deacetylase activity. Histone deacetylase that catalyzes the deacetylation of lysine residues on the N-terminal part of the core histones (H2A, H2B, H3 and H4), and some other non-histone substrates. Histone deacetylation gives a tag for epigenetic repression and plays an important role in transcriptional regulation, cell cycle progression and developmental events. Histone deacetylases act via the formation of large multiprotein complexes, such as N-Cor repressor complex, which activate the histone deacetylase activity. Participates in the BCL6 transcriptional repressor activity by deacetylating the H3 'Lys-27' (H3K27) on enhancer elements, antagonizing EP300 acetyltransferase activity and repressing proximal gene expression. Acts as a molecular chaperone for shuttling phosphorylated NR2C1 to PML bodies for sumoylation. Contributes, together with XBP1 isoform 1, to the activation of NFE2L2-mediated HMOX1 transcription factor gene expression in a PI(3)K/mTORC2/Akt-dependent signaling pathway leading to endothelial cell (EC) survival under disturbed flow/oxidative stress. Regulates both the transcriptional activation and repression phases of the circadian clock in a deacetylase activity-independent manner. During the activation phase, promotes the accumulation of ubiquitinated BMAL1 at the E-boxes and during the repression phase, blocks FBXL3-mediated CRY1/2 ubiquitination and promotes the interaction of CRY1 and BMAL1. The NCOR1-HDAC3 complex regulates the circadian expression of the core clock gene BMAL1 and the genes involved in lipid metabolism in the liver. Also functions as a deacetylase for non-histone targets, such as KAT5, MEF2D, MAPK14, RARA and STAT3. Serves as a corepressor of RARA, mediating its deacetylation and repression, leading to inhibition of RARE DNA element binding. In association with RARA, plays a role in the repression of microRNA-10a and thereby in the inflammatory response. In addition to protein deacetylase activity, also acts as a protein-lysine deacylase by recognizing other acyl groups: catalyzes removal of (2E)-butenoyl (crotonyl), lactoyl (lactyl) and 2-hydroxyisobutanoyl (2-hydroxyisobutyryl) acyl groups from lysine residues, leading to protein decrotonylation, delactylation and de-2-hydroxyisobutyrylation, respectively. Catalyzes decrotonylation of MAPRE1/EB1. Mediates delactylation NBN/NBS1, thereby inhibiting DNA double-strand breaks (DSBs) via homologous recombination (HR). The protein is Histone deacetylase 3 (HDAC3) of Homo sapiens (Human).